A 142-amino-acid chain; its full sequence is Large ribosomal subunit protein uL13 (142 aa).

The protein belongs to the universal ribosomal protein uL13 family. Part of the 50S ribosomal subunit.

In terms of biological role, this protein is one of the early assembly proteins of the 50S ribosomal subunit, although it is not seen to bind rRNA by itself. It is important during the early stages of 50S assembly. The protein is Large ribosomal subunit protein uL13 of Buchnera aphidicola subsp. Acyrthosiphon pisum (strain 5A).